The primary structure comprises 250 residues: Cytochrome c oxidase subunit 2 (250 aa).

The Mitochondrial intermembrane segment spans residues 1–39 (MFFLINKLVMNFDAPSPWGIYFQDSATPQMEGLNELHDN). Residues 40–60 (IMYYLVVILFAVGWILLSIVI) traverse the membrane as a helical segment. Over 61-81 (NYVSTKSPISHKYLNHGTLIE) the chain is Mitochondrial matrix. The helical transmembrane segment at 82 to 104 (LIWTITPAVILILIAFPSFKLLY) threads the bilayer. Over 105–250 (LMDEVSDPSM…EKFLIWLKEQ (146 aa)) the chain is Mitochondrial intermembrane. 6 residues coordinate Cu cation: histidine 185, cysteine 220, glutamate 222, cysteine 224, histidine 228, and methionine 231. Residue glutamate 222 coordinates Mg(2+).

The protein belongs to the cytochrome c oxidase subunit 2 family. As to quaternary structure, component of the cytochrome c oxidase (complex IV, CIV), a multisubunit enzyme composed of a catalytic core of 3 subunits and several supernumerary subunits. The complex exists as a monomer or a dimer and forms supercomplexes (SCs) in the inner mitochondrial membrane with ubiquinol-cytochrome c oxidoreductase (cytochrome b-c1 complex, complex III, CIII). Requires Cu cation as cofactor.

The protein resides in the mitochondrion inner membrane. The catalysed reaction is 4 Fe(II)-[cytochrome c] + O2 + 8 H(+)(in) = 4 Fe(III)-[cytochrome c] + 2 H2O + 4 H(+)(out). In terms of biological role, component of the cytochrome c oxidase, the last enzyme in the mitochondrial electron transport chain which drives oxidative phosphorylation. The respiratory chain contains 3 multisubunit complexes succinate dehydrogenase (complex II, CII), ubiquinol-cytochrome c oxidoreductase (cytochrome b-c1 complex, complex III, CIII) and cytochrome c oxidase (complex IV, CIV), that cooperate to transfer electrons derived from NADH and succinate to molecular oxygen, creating an electrochemical gradient over the inner membrane that drives transmembrane transport and the ATP synthase. Cytochrome c oxidase is the component of the respiratory chain that catalyzes the reduction of oxygen to water. Electrons originating from reduced cytochrome c in the intermembrane space (IMS) are transferred via the dinuclear copper A center (CU(A)) of subunit 2 and heme A of subunit 1 to the active site in subunit 1, a binuclear center (BNC) formed by heme A3 and copper B (CU(B)). The BNC reduces molecular oxygen to 2 water molecules using 4 electrons from cytochrome c in the IMS and 4 protons from the mitochondrial matrix. This chain is Cytochrome c oxidase subunit 2 (COII), found in Podospora anserina (strain S / ATCC MYA-4624 / DSM 980 / FGSC 10383) (Pleurage anserina).